We begin with the raw amino-acid sequence, 615 residues long: Putative binding protein BRA0576/BS1330_II0571 (615 aa).

Positions Met1 to Ala29 are cleaved as a signal peptide.

This sequence belongs to the bacterial solute-binding protein 5 family.

The protein localises to the periplasm. This chain is Putative binding protein BRA0576/BS1330_II0571, found in Brucella suis biovar 1 (strain 1330).